A 439-amino-acid polypeptide reads, in one-letter code: Vacuolar zinc transporter COT1 (439 aa).

Residues 1–9 (MKLGSKQVK) are Cytoplasmic-facing. A helical transmembrane segment spans residues 10–30 (IISLLLLDTVFFGIEITTGYL). At 31–33 (SHS) the chain is on the vacuolar side. The chain crosses the membrane as a helical span at residues 34 to 54 (LALIADSFHMLNDIISLVVAL). The Cytoplasmic segment spans residues 55-76 (WAVNVAKNRNPDSTYTYGWKRA). The chain crosses the membrane as a helical span at residues 77 to 97 (EILGALINAVFLIALCVSILI). Residues 98–113 (EALQRIIAPPVIENPK) are Vacuolar-facing. Residues 114-134 (FVLYVGVAGLISNTVGLFLFH) form a helical membrane-spanning segment. At 135 to 244 (DNDQEHGHGH…RKRSLNMHGV (110 aa)) the chain is on the cytoplasmic side. 3 short sequence motifs (histidine repeat) span residues 140–144 (HGHGH), 165–169 (HTHAH), and 219–223 (SSHTI). A compositionally biased stretch (polar residues) spans 207-230 (PENASKTPSYSTSSHTIASGGNYT). Residues 207–231 (PENASKTPSYSTSSHTIASGGNYTE) form a disordered region. S225 carries the phosphoserine modification. Residues 245-265 (FLHVLGDALGNIGVMLSAFFI) form a helical membrane-spanning segment. Residues 266 to 274 (WKTDYSWKY) lie on the Vacuolar side of the membrane. The helical transmembrane segment at 275-295 (YTDPLVSLIITGIIFSSALPL) threads the bilayer. The Cytoplasmic segment spans residues 296–439 (SCKASKILLQ…CNTADCLEDH (144 aa)). A Glycyl lysine isopeptide (Lys-Gly) (interchain with G-Cter in ubiquitin) cross-link involves residue K301. Positions 388–402 (TSTERAGDSQGDHLQ) are enriched in basic and acidic residues. The segment at 388-408 (TSTERAGDSQGDHLQNDPLSL) is disordered.

This sequence belongs to the cation diffusion facilitator (CDF) transporter (TC 2.A.4) family. SLC30A subfamily.

It is found in the vacuole membrane. It catalyses the reaction Zn(2+)(in) = Zn(2+)(out). Vacuolar transporter that regulates zinc homeostasis by mediating zinc transport and storage into the vacuole. Plays a role in resistance to zinc shock resulting from sudden influx of zinc into cytoplasm. May also participate in the regulation of cobalt levels under normal physiological conditions and may be important in the supply of metal that is required for metalloenzyme or cofactor synthesis. Involved in the resistance to cobalt and rhodium ions. This chain is Vacuolar zinc transporter COT1, found in Saccharomyces cerevisiae (strain ATCC 204508 / S288c) (Baker's yeast).